We begin with the raw amino-acid sequence, 317 residues long: Mitochondrial thiamine pyrophosphate carrier 1 (317 aa).

6 consecutive transmembrane segments (helical) span residues 21–41 (AVSG…ARSV), 86–106 (VPAS…YAWL), 122–142 (LAVG…LDLL), 176–196 (GGAW…GIYE), 207–227 (LPWL…AAVF), and 281–300 (GLTM…LWVY). Solcar repeat units lie at residues 22-109 (VSGL…LNTA), 116-201 (PPQA…CTIA), and 206-306 (GLPW…CLRL).

This sequence belongs to the mitochondrial carrier (TC 2.A.29) family.

It is found in the mitochondrion inner membrane. Functionally, mitochondrial transporter that mediates uptake of thiamine pyrophosphate (ThPP) into mitochondria. The sequence is that of Mitochondrial thiamine pyrophosphate carrier 1 (TPC1) from Eremothecium gossypii (strain ATCC 10895 / CBS 109.51 / FGSC 9923 / NRRL Y-1056) (Yeast).